The primary structure comprises 435 residues: Tol-Pal system protein TolB (435 aa).

Positions 1–24 (MIPMPKMIRSLLLLFCLLPLGAQA) are cleaved as a signal peptide.

Belongs to the TolB family. As to quaternary structure, the Tol-Pal system is composed of five core proteins: the inner membrane proteins TolA, TolQ and TolR, the periplasmic protein TolB and the outer membrane protein Pal. They form a network linking the inner and outer membranes and the peptidoglycan layer.

It localises to the periplasm. In terms of biological role, part of the Tol-Pal system, which plays a role in outer membrane invagination during cell division and is important for maintaining outer membrane integrity. The polypeptide is Tol-Pal system protein TolB (Thioalkalivibrio sulfidiphilus (strain HL-EbGR7)).